A 545-amino-acid chain; its full sequence is Chaperonin GroEL (545 aa).

Residues 30–33, K51, 87–91, G415, and D496 contribute to the ATP site; these read TLGP and DGTTT.

It belongs to the chaperonin (HSP60) family. In terms of assembly, forms a cylinder of 14 subunits composed of two heptameric rings stacked back-to-back. Interacts with the co-chaperonin GroES.

The protein localises to the cytoplasm. The enzyme catalyses ATP + H2O + a folded polypeptide = ADP + phosphate + an unfolded polypeptide.. In terms of biological role, together with its co-chaperonin GroES, plays an essential role in assisting protein folding. The GroEL-GroES system forms a nano-cage that allows encapsulation of the non-native substrate proteins and provides a physical environment optimized to promote and accelerate protein folding. The protein is Chaperonin GroEL of Chlorobaculum tepidum (strain ATCC 49652 / DSM 12025 / NBRC 103806 / TLS) (Chlorobium tepidum).